Reading from the N-terminus, the 253-residue chain is Indole-3-glycerol phosphate synthase (253 aa).

Belongs to the TrpC family.

It carries out the reaction 1-(2-carboxyphenylamino)-1-deoxy-D-ribulose 5-phosphate + H(+) = (1S,2R)-1-C-(indol-3-yl)glycerol 3-phosphate + CO2 + H2O. It participates in amino-acid biosynthesis; L-tryptophan biosynthesis; L-tryptophan from chorismate: step 4/5. This Bacillus cereus (strain B4264) protein is Indole-3-glycerol phosphate synthase.